A 372-amino-acid polypeptide reads, in one-letter code: Mitogen-activated protein kinase kinase kinase 17 (372 aa).

The region spanning 3–259 is the Protein kinase domain; that stretch reads WTRGRILGRG…ATQLLNHPFL (257 aa). ATP contacts are provided by residues 9-17 and lysine 32; that span reads LGRGSTATV. Residue aspartate 126 is the Proton acceptor of the active site. The residue at position 312 (serine 312) is a Phosphoserine.

The protein belongs to the protein kinase superfamily. Ser/Thr protein kinase family. As to quaternary structure, binds to MKK3.

It is found in the nucleus. It catalyses the reaction L-seryl-[protein] + ATP = O-phospho-L-seryl-[protein] + ADP + H(+). The enzyme catalyses L-threonyl-[protein] + ATP = O-phospho-L-threonyl-[protein] + ADP + H(+). Component of the abscisic acid (ABA) signaling pathway that may act as ABA signal transducer in the context of abiotic stresses. Triggers MPK7 activation in a MKK3-dependent manner. Mediates the ABA-dependent activation of the MKK3-MPK7 module. The chain is Mitogen-activated protein kinase kinase kinase 17 from Arabidopsis thaliana (Mouse-ear cress).